We begin with the raw amino-acid sequence, 504 residues long: Deoxyguanosinetriphosphate triphosphohydrolase (504 aa).

Residues 66–273 (RLTHSMEVQQ…MEAADDISYC (208 aa)) enclose the HD domain.

Belongs to the dGTPase family. Type 1 subfamily. In terms of assembly, homotetramer. Mg(2+) is required as a cofactor.

It catalyses the reaction dGTP + H2O = 2'-deoxyguanosine + triphosphate + H(+). Functionally, dGTPase preferentially hydrolyzes dGTP over the other canonical NTPs. The protein is Deoxyguanosinetriphosphate triphosphohydrolase of Enterobacter sp. (strain 638).